A 344-amino-acid chain; its full sequence is Oxygen sensor histidine kinase NreB (344 aa).

[4Fe-4S] cluster is bound by residues C58, C61, C73, and C76. A Histidine kinase domain is found at 147-344 (ENERKRISRE…GTIITLDIPI (198 aa)). H158 bears the Phosphohistidine; by autocatalysis mark.

Requires [4Fe-4S] cluster as cofactor. Post-translationally, autophosphorylated.

It is found in the cytoplasm. It carries out the reaction ATP + protein L-histidine = ADP + protein N-phospho-L-histidine.. In terms of biological role, member of the two-component regulatory system NreB/NreC involved in the control of dissimilatory nitrate/nitrite reduction in response to oxygen. NreB functions as a direct oxygen sensor histidine kinase which is autophosphorylated, in the absence of oxygen, probably at the conserved histidine residue, and transfers its phosphate group probably to a conserved aspartate residue of NreC. NreB/NreC activates the expression of the nitrate (narGHJI) and nitrite (nir) reductase operons, as well as the putative nitrate transporter gene narT. The polypeptide is Oxygen sensor histidine kinase NreB (nreB) (Staphylococcus epidermidis (strain ATCC 12228 / FDA PCI 1200)).